Consider the following 237-residue polypeptide: Phosphoribosylaminoimidazole-succinocarboxamide synthase (237 aa).

The protein belongs to the SAICAR synthetase family.

It carries out the reaction 5-amino-1-(5-phospho-D-ribosyl)imidazole-4-carboxylate + L-aspartate + ATP = (2S)-2-[5-amino-1-(5-phospho-beta-D-ribosyl)imidazole-4-carboxamido]succinate + ADP + phosphate + 2 H(+). It participates in purine metabolism; IMP biosynthesis via de novo pathway; 5-amino-1-(5-phospho-D-ribosyl)imidazole-4-carboxamide from 5-amino-1-(5-phospho-D-ribosyl)imidazole-4-carboxylate: step 1/2. The sequence is that of Phosphoribosylaminoimidazole-succinocarboxamide synthase from Shigella boydii serotype 4 (strain Sb227).